Reading from the N-terminus, the 562-residue chain is Potassium-transporting ATPase potassium-binding subunit (562 aa).

The next 12 helical transmembrane spans lie at 5–25 (GILA…PLGG), 65–85 (AYLR…YAVF), 135–155 (IGIT…AMAF), 181–201 (LLLP…VPET), 257–277 (ILEI…AGHF), 283–303 (LAIV…YIVY), 331–351 (FGLP…TGAV), 358–378 (LMPL…IFGG), 381–401 (VGLL…GLMV), 422–442 (AAML…MALP), 486–506 (ISIG…MLAI), and 528–548 (FAFG…TFFP).

This sequence belongs to the KdpA family. In terms of assembly, the system is composed of three essential subunits: KdpA, KdpB and KdpC.

The protein localises to the cell membrane. Its function is as follows. Part of the high-affinity ATP-driven potassium transport (or Kdp) system, which catalyzes the hydrolysis of ATP coupled with the electrogenic transport of potassium into the cytoplasm. This subunit binds the extracellular potassium ions and delivers the ions to the membrane domain of KdpB through an intramembrane tunnel. The chain is Potassium-transporting ATPase potassium-binding subunit from Alicyclobacillus acidocaldarius subsp. acidocaldarius (strain ATCC 27009 / DSM 446 / BCRC 14685 / JCM 5260 / KCTC 1825 / NBRC 15652 / NCIMB 11725 / NRRL B-14509 / 104-IA) (Bacillus acidocaldarius).